The following is a 133-amino-acid chain: ATP synthase epsilon chain, chloroplastic (133 aa).

The protein belongs to the ATPase epsilon chain family. In terms of assembly, F-type ATPases have 2 components, CF(1) - the catalytic core - and CF(0) - the membrane proton channel. CF(1) has five subunits: alpha(3), beta(3), gamma(1), delta(1), epsilon(1). CF(0) has three main subunits: a, b and c.

The protein resides in the plastid. The protein localises to the chloroplast thylakoid membrane. Produces ATP from ADP in the presence of a proton gradient across the membrane. In Ipomoea batatas (Sweet potato), this protein is ATP synthase epsilon chain, chloroplastic.